A 229-amino-acid chain; its full sequence is Urease accessory protein UreF (229 aa).

The protein belongs to the UreF family. In terms of assembly, ureD, UreF and UreG form a complex that acts as a GTP-hydrolysis-dependent molecular chaperone, activating the urease apoprotein by helping to assemble the nickel containing metallocenter of UreC. The UreE protein probably delivers the nickel.

It localises to the cytoplasm. Required for maturation of urease via the functional incorporation of the urease nickel metallocenter. The protein is Urease accessory protein UreF of Ralstonia pickettii (strain 12J).